The following is a 1357-amino-acid chain: MKRDFTFFCRIWIGIPFFSGLVNGFSMSPPTLDNTKDQLVINANDTLNITCRGQRILDWSWPEESLSKVEFTDRQGQQSPTDTPGYREIRLKECQGVAGKPYCKILILTNAQANDSGYYRCFYKDIKAVIDGTTAASIFVFVRDPEHPFIKRGDNDMETIFITDSETHIEVPCLVSDPDLKVTLFSLVPYPEPVDGSVVTWNNKKGWSIPRHIIQNTSTFIGFYCSISVQNSQHTSSIYVVQVIGLKFYEFKLFPEDSPVELMQGESLVLNCTALVDFNTGVDFQWDYPGKKENRLASLQPLRNVLDEATEISSILSIRNIHLDDSGYYTCWANTLEMKRELTTVVIVHEKPFISLDYRNGSVIEAKEGQKSVRLSVKVSAYPSPEIQWYKNGKLISSKNSSRFKVQQHSLQIRDVCKQDAGEYMLVLKNSPAALEKRLNFTLIVNVPPQIHEKEAAPPTNLYGKGTRQILTCTADGSPPASISWQWRPWSPCDLERTRRALRRRGGRDQSPFCHNWMDLDPEHAVNPIESIDTLTQMVDGKEKTVGRVVIQNASVPAMYKCLAENRVGKDERLIYFYVTTIPEGFDIEMEPSEDPLEQDLVQLKCNADNFTYENLRWYRLDPQTVPPELDCKSLHQYATFLEGQLSFQTTSNNWVLQLNITNIQLQDEGNYVCEVQNRRTGVKHCHRKYIPVKAMEAPRYRHNPTNHTVNVSESLQMNCDVEGTPFPQLSWFKDNQPLHQISGILLQDSNRTLSIQRVREEDAGLYTCSACNQKGCVQSSATVSVIGSDDKTNVEIVILIGTGVIAIFFWVLLLVIFCNVKRVNPADIKTGYLSIIMDPGEVPLEEQCEYLPYDSSQWEISRDRLRLGKVLGHGAFGKVIEASIFGHDKKSSANTVAVKMLKEGATASEHKALMSELKILIHIGNHLNVVNLLGACTKPNGPLMVIVEYCKYGNLSNFLRAKREFFLPYRDRSPKTQSQVRRMIEAGQASQSEHQPSTSSTNPPRVTVDDLWKTPLTIEDLICYSFQVARGMEFLASRKCIHRDLAARNILLSENNVVKICDFGLARDIYKDPDYVRKGNARLPLKWMAPESIFDKVYTSQSDVWSFGVLLWEIFSLGASPYPGIQIDEDFCKRLKDGTRMRAPDNASPEIYGIMLACWQGEPRERPTFPALVEILGDLLQENSLPEIPFNVSQSSEDDGFSQASSRPPSQEEIRLACNTLPTRYYNCVPFAGCVMVGPSSTCHSRVKTFEELPMEMTSHKTQHDSQTDSGMVLASDELERFEHKHRGAMLTTATTGQSTDRLISCPSVSSSGSGGGLLRPVFFTQLSGQTFYNNEYGHLSEEGVSDYFSSSDQAV.

Residues 1-24 (MKRDFTFFCRIWIGIPFFSGLVNG) form the signal peptide. Ig-like C2-type domains are found at residues 25 to 121 (FSMS…YYRC), 138 to 244 (IFVF…VQVI), 255 to 343 (PEDS…RELT), 352 to 442 (PFIS…LNFT), 453 to 583 (EKEA…TTIP), 583 to 690 (PEGF…HRKY), and 699 to 785 (PRYR…ATVS). The Extracellular segment spans residues 25-796 (FSMSPPTLDN…IGSDDKTNVE (772 aa)). Asparagine 44, asparagine 48, asparagine 114, asparagine 216, and asparagine 271 each carry an N-linked (GlcNAc...) asparagine glycan. Disulfide bonds link cysteine 51–cysteine 121 and cysteine 173–cysteine 225. Cysteines 272 and 331 form a disulfide. 3 N-linked (GlcNAc...) asparagine glycosylation sites follow: asparagine 360, asparagine 400, and asparagine 440. Cystine bridges form between cysteine 473–cysteine 562, cysteine 493–cysteine 514, and cysteine 606–cysteine 674. Asparagine 553, asparagine 610, asparagine 660, asparagine 707, asparagine 711, and asparagine 751 each carry an N-linked (GlcNAc...) asparagine glycan. Cysteine 720 and cysteine 772 are joined by a disulfide. A helical membrane pass occupies residues 797-817 (IVILIGTGVIAIFFWVLLLVI). The Cytoplasmic portion of the chain corresponds to 818 to 1357 (FCNVKRVNPA…DYFSSSDQAV (540 aa)). The Protein kinase domain maps to 866–1181 (LRLGKVLGHG…ALVEILGDLL (316 aa)). Residues 872 to 880 (LGHGAFGKV) and lysine 900 contribute to the ATP site. The interval 978-1007 (QSQVRRMIEAGQASQSEHQPSTSSTNPPRV) is disordered. Over residues 989 to 1005 (QASQSEHQPSTSSTNPP) the composition is skewed to polar residues. The Proton acceptor role is filled by aspartate 1045. Phosphotyrosine; by autocatalysis is present on residues tyrosine 1071 and tyrosine 1076. The interval 1192 to 1212 (NVSQSSEDDGFSQASSRPPSQ) is disordered. A phosphotyrosine; by autocatalysis mark is found at tyrosine 1226, tyrosine 1227, tyrosine 1334, and tyrosine 1338.

It belongs to the protein kinase superfamily. Tyr protein kinase family. CSF-1/PDGF receptor subfamily. As to quaternary structure, interacts with vegfc and vegfd. Monomer in the absence of bound vegfc or vegfd. Homodimer in the presence of bound vegfc or vegfd. Autophosphorylated on tyrosine residues upon ligand binding. Autophosphorylation occurs in trans, i.e. one subunit of the dimeric receptor phosphorylates tyrosine residues on the other subunit.

The protein localises to the cell membrane. It localises to the cytoplasm. Its subcellular location is the nucleus. It carries out the reaction L-tyrosyl-[protein] + ATP = O-phospho-L-tyrosyl-[protein] + ADP + H(+). With respect to regulation, present in an inactive conformation in the absence of bound ligand. Binding of vegfc or vegfd leads to dimerization and activation by autophosphorylation on tyrosine residues. Tyrosine-protein kinase that acts as a cell-surface receptor for vegf or vegfc. Combinations of multiple VEGF receptors are required for development of different blood vessel types in the embryo. Involved in angiogenesis, specifically in VEGF-induced sprouting of new blood vessels, but not required for proper vasculogenesis or hematopoiesis. In Danio rerio (Zebrafish), this protein is Vascular endothelial growth factor receptor 3 (flt4).